Here is a 455-residue protein sequence, read N- to C-terminus: Kynurenine--oxoglutarate transaminase 3 (455 aa).

G72 is a substrate binding site. K117 carries the post-translational modification N6-acetyllysine; alternate. K117 is modified (N6-succinyllysine; alternate). Residue N219 coordinates substrate. N6-(pyridoxal phosphate)lysine is present on K281. R430 contributes to the substrate binding site.

Belongs to the class-I pyridoxal-phosphate-dependent aminotransferase family. As to quaternary structure, homodimer. Pyridoxal 5'-phosphate serves as cofactor. Widely expressed, with higher expression levels in liver, kidney, heart and neuroendocrine tissues.

It catalyses the reaction L-kynurenine + 2-oxoglutarate = kynurenate + L-glutamate + H2O. It carries out the reaction L-kynurenine + glyoxylate = kynurenate + glycine + H2O. The catalysed reaction is 3-hydroxy-L-kynurenine + glyoxylate = xanthurenate + glycine + H2O. The enzyme catalyses an S-substituted L-cysteine + H2O = a thiol + pyruvate + NH4(+). It participates in amino-acid degradation; L-kynurenine degradation; kynurenate from L-kynurenine: step 1/2. With respect to regulation, kynurenine transamination is competitively inhibited by cysteine, glutamine, histidine, methionine, leucine, or phenylalanine. Functionally, catalyzes the irreversible transamination of the L-tryptophan metabolite L-kynurenine to form kynurenic acid (KA), an intermediate in the tryptophan catabolic pathway which is also a broad spectrum antagonist of the three ionotropic excitatory amino acid receptors among others. May catalyze the beta-elimination of S-conjugates and Se-conjugates of L-(seleno)cysteine, resulting in the cleavage of the C-S or C-Se bond. Has transaminase activity towards L-kynurenine, tryptophan, phenylalanine, serine, cysteine, methionine, histidine, glutamine and asparagine with glyoxylate as an amino group acceptor (in vitro). Has lower activity with 2-oxoglutarate as amino group acceptor (in vitro). This Mus musculus (Mouse) protein is Kynurenine--oxoglutarate transaminase 3 (Kyat3).